A 94-amino-acid polypeptide reads, in one-letter code: Mitochondrial import inner membrane translocase subunit Tim8 A (94 aa).

Residues 47–70 carry the Twin CX3C motif motif; the sequence is CWDKCIDRPGNKLDSRTESCLVSC. 2 disulfides stabilise this stretch: cysteine 47/cysteine 70 and cysteine 51/cysteine 66.

It belongs to the small Tim family. As to quaternary structure, heterohexamer; composed of 3 copies of TIMM8A and 3 copies of TIMM13, named soluble 70 kDa complex. Associates with the TIM22 complex, whose core is composed of TIMM22.

The protein localises to the mitochondrion inner membrane. Its function is as follows. Mitochondrial intermembrane chaperone that participates in the import and insertion of some multi-pass transmembrane proteins into the mitochondrial inner membrane. Also required for the transfer of beta-barrel precursors from the TOM complex to the sorting and assembly machinery (SAM complex) of the outer membrane. Acts as a chaperone-like protein that protects the hydrophobic precursors from aggregation and guide them through the mitochondrial intermembrane space. The TIMM8-TIMM13 complex mediates the import of some proteins while the predominant TIMM9-TIMM10 70 kDa complex mediates the import of much more proteins. This Xenopus laevis (African clawed frog) protein is Mitochondrial import inner membrane translocase subunit Tim8 A (timm8a).